Here is a 564-residue protein sequence, read N- to C-terminus: Hsp70-Hsp90 organising protein (564 aa).

3 TPR repeats span residues 7 to 40 (AQRL…DPLD), 42 to 74 (VLYS…KKDW), and 76 to 108 (KGYI…DPNN). The stretch at 197 to 239 (EGNDAEERQRQQREEEERRKKKEEEERKKKEEEEMKKQNRTPE) forms a coiled coil. The tract at residues 199-247 (NDAEERQRQQREEEERRKKKEEEERKKKEEEEMKKQNRTPEQIQGDEHK) is disordered. Residues 201-233 (AEERQRQQREEEERRKKKEEEERKKKEEEEMKK) show a composition bias toward basic and acidic residues. 6 TPR repeats span residues 243-276 (GDEH…NPND), 278-310 (MYHY…RYNF), 318-351 (AKLY…DNNR), 378-411 (AEEH…NPND), 413-445 (KLYS…DPTF), and 446-479 (VKAY…DPNN). The 40-residue stretch at 513–552 (DPEIQQIISDPQFQIILQKLNENPNSISEYIKDPKIFNGL) folds into the STI1 domain.

As to quaternary structure, monomer. Homodimer. Forms a complex composed of HOP and chaperones HSP70 and HSP90; the interaction is stronger in the absence of ATP. Interacts (via TPR 1, 2, 3, 7, 8 and 9 repeats) with HSP70 (via C-terminus); the interaction is direct and is stronger in the absence of ATP. Interacts (via TPR 4, 5 and 6 repeats) with HSP90 (via C-terminus); the interaction is direct.

The protein localises to the cytoplasm. In terms of biological role, acts as a co-chaperone and mediates the association of the chaperones HSP70 and HSP90 probably facilitating substrate transfer from HSP70 to HSP90. Stimulates HSP70 ATPase activity and, in contrast, inhibits HSP90 ATPase activity. The protein is Hsp70-Hsp90 organising protein of Plasmodium falciparum (isolate 3D7).